Here is a 475-residue protein sequence, read N- to C-terminus: Putative poly(A) polymerase catalytic subunit (475 aa).

This sequence belongs to the poxviridae poly(A) polymerase catalytic subunit family. Highly divergent.

It is found in the virion. The catalysed reaction is RNA(n) + ATP = RNA(n)-3'-adenine ribonucleotide + diphosphate. Its function is as follows. Polymerase that creates the 3'-poly(A) tail of mRNA's. In Ornithodoros (relapsing fever ticks), this protein is Putative poly(A) polymerase catalytic subunit.